The following is a 488-amino-acid chain: V-type proton ATPase subunit B 1 (488 aa).

This sequence belongs to the ATPase alpha/beta chains family. In terms of assembly, V-ATPase is a heteromultimeric enzyme composed of a peripheral catalytic V1 complex (main components: subunits A, B, C, D, E, and F) attached to an integral membrane V0 proton pore complex (main component: the proteolipid protein).

Functionally, non-catalytic subunit of the peripheral V1 complex of vacuolar ATPase. V-ATPase is responsible for acidifying a variety of intracellular compartments in eukaryotic cells. The protein is V-type proton ATPase subunit B 1 of Hordeum vulgare (Barley).